Reading from the N-terminus, the 298-residue chain is Glycine--tRNA ligase alpha subunit (298 aa).

Belongs to the class-II aminoacyl-tRNA synthetase family. Tetramer of two alpha and two beta subunits.

It localises to the cytoplasm. The enzyme catalyses tRNA(Gly) + glycine + ATP = glycyl-tRNA(Gly) + AMP + diphosphate. The chain is Glycine--tRNA ligase alpha subunit from Gloeothece citriformis (strain PCC 7424) (Cyanothece sp. (strain PCC 7424)).